Consider the following 151-residue polypeptide: Large ribosomal subunit protein uL16 (151 aa).

The protein belongs to the universal ribosomal protein uL16 family. Part of the 50S ribosomal subunit.

In terms of biological role, binds 23S rRNA and is also seen to make contacts with the A and possibly P site tRNAs. The sequence is that of Large ribosomal subunit protein uL16 from Chloroflexus aurantiacus (strain ATCC 29364 / DSM 637 / Y-400-fl).